The chain runs to 215 residues: Ribose-5-phosphate isomerase A (215 aa).

Substrate is bound by residues 26–29, 79–82, and 92–95; these read TGST, DGAD, and KGGG. E101 acts as the Proton acceptor in catalysis. K119 contributes to the substrate binding site.

The protein belongs to the ribose 5-phosphate isomerase family. Homodimer.

The catalysed reaction is aldehydo-D-ribose 5-phosphate = D-ribulose 5-phosphate. Its pathway is carbohydrate degradation; pentose phosphate pathway; D-ribose 5-phosphate from D-ribulose 5-phosphate (non-oxidative stage): step 1/1. Catalyzes the reversible conversion of ribose-5-phosphate to ribulose 5-phosphate. The chain is Ribose-5-phosphate isomerase A from Stenotrophomonas maltophilia (strain K279a).